Consider the following 91-residue polypeptide: Small ribosomal subunit protein bS18 (91 aa).

The segment at 1–21 is disordered; it reads MSDERAPQRSTGPRKKRPFQR. Positions 12–21 are enriched in basic residues; sequence GPRKKRPFQR.

It belongs to the bacterial ribosomal protein bS18 family. Part of the 30S ribosomal subunit. Forms a tight heterodimer with protein bS6.

Functionally, binds as a heterodimer with protein bS6 to the central domain of the 16S rRNA, where it helps stabilize the platform of the 30S subunit. The protein is Small ribosomal subunit protein bS18 of Geotalea daltonii (strain DSM 22248 / JCM 15807 / FRC-32) (Geobacter daltonii).